The following is a 423-amino-acid chain: MNREGLLIEILKNQVVPALGCTEPIAVAYGVSKAKEILGEEVEHMEVNVDRSIFKNGKEVGIPGTDKKGILIAAALSIIVGKSEYSLQVLKDLTNEDIPKALELIQNNVVKLNLKEGVKGLYIEIIASGNKNKSRVVIKNNHLNIVLLEKNGMCIEEKSEEKSSVSVNLRDEIRNFTIKDLKDFVDNIDIEDIYFINEGIAMNKRIAKEGLDNKLGLGLGDLLKSEENNVIEYAKAVTSGACEARMSGYPLPVMSSAGSGNHGLVAILPIASIGEKLEKNEEKVIRSVALSHLVTIYIKSYTGALSPVCGCGVAAGVGASAGLCYLMDGTLEQIYGAIKNMIAGISGMICDGAKLGCAYKLCISVSSSIDAARMALKNIFVPSNDGILDETAEKSIQNLGKVSTDGMSCTDEVILEVMLDRCN.

The protein belongs to the UPF0597 family.

This Clostridium tetani (strain Massachusetts / E88) protein is UPF0597 protein CTC_02309.